The sequence spans 375 residues: FAD-dependent catabolic D-arginine dehydrogenase DauA (375 aa).

Residues A14, 32–33, 41–48, A171, and 331–336 each bind FAD; these read ER, STGRSAAH, and GGYGIQ.

This sequence belongs to the FAD-dependent glycerol-3-phosphate dehydrogenase family. In terms of assembly, monomer. It depends on FAD as a cofactor.

The catalysed reaction is D-arginine + A + H2O = 5-guanidino-2-oxopentanoate + AH2 + NH4(+). It catalyses the reaction a D-alpha-amino acid + A + H2O = a 2-oxocarboxylate + AH2 + NH4(+). Inhibited by D-arginine and D-lysine at high concentration. In terms of biological role, dauA is highly expressed within the cystic fibrosis (CF) lung, and it is required for virulence via the optimal production of hydrogen cyanide, pyocyanine, pyoverdine, rhamnolipid and alginate during biofilm formation. Involved in the catabolism of D-lysine and D-arginine. Under aerobic conditions, the arginine succinyltransferase (AST) and arginine transaminase (ATA) pathways are 2 major routes for L-arginine utilization as the sole source of carbon and nitrogen. The D-to-L racemization of arginine by DauA and DauB is necessary, before to be channeled into the AST and/or ATA pathways. DauA catalyzes the flavin-dependent oxidative deamination of D-arginine into 2-ketoarginine (2-KA) and ammonia. It also has dehydrogenase activity towards D-lysine, D-tyrosine, D-methionine, D-phenylalanine, D-ornithine, D-histidine and D-leucine as substrates. The protein is FAD-dependent catabolic D-arginine dehydrogenase DauA of Pseudomonas aeruginosa (strain ATCC 15692 / DSM 22644 / CIP 104116 / JCM 14847 / LMG 12228 / 1C / PRS 101 / PAO1).